Consider the following 308-residue polypeptide: Ribonuclease Z (308 aa).

The Zn(2+) site is built by His-60, His-62, Asp-64, His-65, His-140, Asp-209, and His-269. Asp-64 (proton acceptor) is an active-site residue.

The protein belongs to the RNase Z family. In terms of assembly, homodimer. Requires Zn(2+) as cofactor.

It carries out the reaction Endonucleolytic cleavage of RNA, removing extra 3' nucleotides from tRNA precursor, generating 3' termini of tRNAs. A 3'-hydroxy group is left at the tRNA terminus and a 5'-phosphoryl group is left at the trailer molecule.. Functionally, zinc phosphodiesterase, which displays some tRNA 3'-processing endonuclease activity. Probably involved in tRNA maturation, by removing a 3'-trailer from precursor tRNA. This is Ribonuclease Z from Methanococcus maripaludis (strain C6 / ATCC BAA-1332).